A 741-amino-acid chain; its full sequence is Catalase-peroxidase (741 aa).

Residues 1–23 (MLKKIVTALGMSGMLLASSNAIA) form the signal peptide. Residues 102 to 223 (WHDAGTYRIY…YAATQMGLIY (122 aa)) constitute a cross-link (tryptophyl-tyrosyl-methioninium (Trp-Tyr) (with M-249)). Catalysis depends on histidine 103, which acts as the Proton acceptor. A cross-link (tryptophyl-tyrosyl-methioninium (Tyr-Met) (with W-102)) is located at residues 223–249 (YVNPEGPDGKPDIKGAASEIRQAFRAM). Histidine 264 is a heme b binding site.

It belongs to the peroxidase family. Peroxidase/catalase subfamily. In terms of assembly, homodimer or homotetramer. Requires heme b as cofactor. Post-translationally, formation of the three residue Trp-Tyr-Met cross-link is important for the catalase, but not the peroxidase activity of the enzyme.

The enzyme catalyses H2O2 + AH2 = A + 2 H2O. It catalyses the reaction 2 H2O2 = O2 + 2 H2O. Functionally, bifunctional enzyme with both catalase and broad-spectrum peroxidase activity. The sequence is that of Catalase-peroxidase from Francisella tularensis subsp. tularensis (strain WY96-3418).